The chain runs to 352 residues: Photosystem II D2 protein (352 aa).

Thr2 carries the post-translational modification N-acetylthreonine. Thr2 carries the post-translational modification Phosphothreonine. Residues 40-60 traverse the membrane as a helical segment; that stretch reads TAYLALGGWLTGTTFVTSWYT. His117 is a binding site for chlorophyll a. A helical membrane pass occupies residues 124–140; it reads GFMLRQFEIARSVKLRP. Pheophytin a-binding residues include Gln129 and Asn142. A helical membrane pass occupies residues 152–165; the sequence is VFVSVFLIYPLGQS. His197 contributes to the chlorophyll a binding site. A helical membrane pass occupies residues 207–227; the sequence is AALLCAIHGATVENTLFEDGD. A plastoquinone-binding residues include His214 and Phe261. His214 serves as a coordination point for Fe cation. His268 contacts Fe cation. The helical transmembrane segment at 278–294 threads the bilayer; it reads GLWMSALGVVGLALNLR.

It belongs to the reaction center PufL/M/PsbA/D family. In terms of assembly, PSII is composed of 1 copy each of membrane proteins PsbA, PsbB, PsbC, PsbD, PsbE, PsbF, PsbH, PsbI, PsbJ, PsbK, PsbL, PsbM, PsbT, PsbX, PsbY, PsbZ, Psb30/Ycf12, at least 3 peripheral proteins of the oxygen-evolving complex and a large number of cofactors. It forms dimeric complexes. The D1/D2 heterodimer binds P680, chlorophylls that are the primary electron donor of PSII, and subsequent electron acceptors. It shares a non-heme iron and each subunit binds pheophytin, quinone, additional chlorophylls, carotenoids and lipids. There is also a Cl(-1) ion associated with D1 and D2, which is required for oxygen evolution. The PSII complex binds additional chlorophylls, carotenoids and specific lipids. is required as a cofactor.

The protein localises to the plastid. It is found in the chloroplast thylakoid membrane. The catalysed reaction is 2 a plastoquinone + 4 hnu + 2 H2O = 2 a plastoquinol + O2. Functionally, photosystem II (PSII) is a light-driven water:plastoquinone oxidoreductase that uses light energy to abstract electrons from H(2)O, generating O(2) and a proton gradient subsequently used for ATP formation. It consists of a core antenna complex that captures photons, and an electron transfer chain that converts photonic excitation into a charge separation. The D1/D2 (PsbA/PsbD) reaction center heterodimer binds P680, the primary electron donor of PSII as well as several subsequent electron acceptors. D2 is needed for assembly of a stable PSII complex. The protein is Photosystem II D2 protein of Pleurastrum terricola (Filamentous green alga).